The chain runs to 106 residues: Large ribosomal subunit protein eL42 (106 aa).

This sequence belongs to the eukaryotic ribosomal protein eL42 family.

This chain is Large ribosomal subunit protein eL42 (RPL44), found in Kluyveromyces lactis (strain ATCC 8585 / CBS 2359 / DSM 70799 / NBRC 1267 / NRRL Y-1140 / WM37) (Yeast).